A 576-amino-acid polypeptide reads, in one-letter code: Lipoprotein LpqB (576 aa).

The first 16 residues, 1–16 (MRRVTRTIAAAGAAIA), serve as a signal peptide directing secretion. Cys-17 carries the N-palmitoyl cysteine lipid modification. Residue Cys-17 is the site of S-diacylglycerol cysteine attachment.

This sequence belongs to the LpqB lipoprotein family.

Its subcellular location is the cell membrane. This chain is Lipoprotein LpqB, found in Bifidobacterium longum (strain NCC 2705).